The primary structure comprises 691 residues: POU domain, class 6, transcription factor 2 (691 aa).

Residues methionine 25–alanine 36 are compositionally biased toward basic and acidic residues. Disordered stretches follow at residues methionine 25–proline 93, leucine 186–valine 297, and serine 435–serine 461. The segment covering leucine 186–glutamine 195 has biased composition (low complexity). The segment covering glutamine 196 to glutamine 210 has biased composition (pro residues). The span at alanine 211–leucine 220 shows a compositional bias: low complexity. Positions glutamine 221 to proline 238 are enriched in pro residues. 2 stretches are compositionally biased toward low complexity: residues threonine 239 to proline 280 and serine 438 to serine 461. One can recognise a POU-specific domain in the interval valine 476–glutamate 586. A DNA-binding region (homeobox) is located at residues lysine 607–isoleucine 666.

The protein belongs to the POU transcription factor family. Class-6 subfamily. Expressed only within the CNS, where its expression is restricted to the medical habenulla, to a dispersed population of neurons in the dorsal hypothalamus, and to subsets of ganglion and amacrine cells in the retina.

The protein resides in the nucleus. Probable transcription factor likely to be involved in early steps in the differentiation of amacrine and ganglion cells. Recognizes and binds to the DNA sequence 5'-ATGCAAAT-3'. Isoform 1 does not bind DNA. This is POU domain, class 6, transcription factor 2 (POU6F2) from Homo sapiens (Human).